The sequence spans 395 residues: Phosphopentomutase (395 aa).

Asp12, Asp289, His294, Asp330, His331, and His342 together coordinate Mn(2+).

It belongs to the phosphopentomutase family. Mn(2+) serves as cofactor.

The protein resides in the cytoplasm. The enzyme catalyses 2-deoxy-alpha-D-ribose 1-phosphate = 2-deoxy-D-ribose 5-phosphate. The catalysed reaction is alpha-D-ribose 1-phosphate = D-ribose 5-phosphate. It participates in carbohydrate degradation; 2-deoxy-D-ribose 1-phosphate degradation; D-glyceraldehyde 3-phosphate and acetaldehyde from 2-deoxy-alpha-D-ribose 1-phosphate: step 1/2. Its function is as follows. Isomerase that catalyzes the conversion of deoxy-ribose 1-phosphate (dRib-1-P) and ribose 1-phosphate (Rib-1-P) to deoxy-ribose 5-phosphate (dRib-5-P) and ribose 5-phosphate (Rib-5-P), respectively. The protein is Phosphopentomutase of Levilactobacillus brevis (strain ATCC 367 / BCRC 12310 / CIP 105137 / JCM 1170 / LMG 11437 / NCIMB 947 / NCTC 947) (Lactobacillus brevis).